A 179-amino-acid chain; its full sequence is Large ribosomal subunit protein uL5 (179 aa).

This sequence belongs to the universal ribosomal protein uL5 family. As to quaternary structure, part of the 50S ribosomal subunit; part of the 5S rRNA/L5/L18/L25 subcomplex. Contacts the 5S rRNA and the P site tRNA. Forms a bridge to the 30S subunit in the 70S ribosome.

Its function is as follows. This is one of the proteins that bind and probably mediate the attachment of the 5S RNA into the large ribosomal subunit, where it forms part of the central protuberance. In the 70S ribosome it contacts protein S13 of the 30S subunit (bridge B1b), connecting the 2 subunits; this bridge is implicated in subunit movement. Contacts the P site tRNA; the 5S rRNA and some of its associated proteins might help stabilize positioning of ribosome-bound tRNAs. The polypeptide is Large ribosomal subunit protein uL5 (Staphylococcus haemolyticus (strain JCSC1435)).